Here is a 406-residue protein sequence, read N- to C-terminus: Succinylornithine transaminase (406 aa).

Position 252 is an N6-(pyridoxal phosphate)lysine (lysine 252).

This sequence belongs to the class-III pyridoxal-phosphate-dependent aminotransferase family. AstC subfamily. Requires pyridoxal 5'-phosphate as cofactor.

It carries out the reaction N(2)-succinyl-L-ornithine + 2-oxoglutarate = N-succinyl-L-glutamate 5-semialdehyde + L-glutamate. It participates in amino-acid degradation; L-arginine degradation via AST pathway; L-glutamate and succinate from L-arginine: step 3/5. Catalyzes the transamination of N(2)-succinylornithine and alpha-ketoglutarate into N(2)-succinylglutamate semialdehyde and glutamate. Can also act as an acetylornithine aminotransferase. The polypeptide is Succinylornithine transaminase (Escherichia coli O17:K52:H18 (strain UMN026 / ExPEC)).